The primary structure comprises 703 residues: Calpain-8 (703 aa).

The region spanning 45-344 is the Calpain catalytic domain; the sequence is LFKDPEFPAC…FSRLEICNLS (300 aa). Residues C105, H262, and N286 contribute to the active site. The tract at residues 355-512 is domain III; the sequence is KWNLVLFNGR…VFSEKKAQAL (158 aa). Residues 513–531 form a linker region; it reads EIGDAVPGDPHEPHPRDMD. 4 EF-hand domains span residues 531-566, 575-610, 605-640, and 670-703; these read DGEDEHFWSLSEEFADKDSEISAHQLKRVLNGLLSK, FNINTCREMISLLDGDGTGSLRPVEFKTLWLKICKY, LKICKYLEIYQEMDHSRAGTIDAHEMRTALKKAGFT, and IRLEILFKLFRLLDKDQNGIVQLSLAEWLCRALV. Residues 532-703 form a domain IV region; it reads GEDEHFWSLS…LAEWLCRALV (172 aa). Ca(2+) is bound by residues D588, D590, T592, S594, E599, D618, S620, T624, and E629.

It belongs to the peptidase C2 family. In terms of assembly, monomer and homooligomer. Interacts with COPS1/GPS1, COPB1, EYA2, NME2, NME4 and TOMM70. It depends on Ca(2+) as a cofactor. Post-translationally, undergoes autolytic cleavage between Ala-5 and Ala-6 which gives rise to fragments extending from Ala-6 to the C-terminus, Ala-6 to the EF-hand 2 domain and from Ala-6 to the beginning of domain III. As to expression, predominantly expressed in the stomach. Localizes strictly to the surface mucus cells in the gastric epithelium and the mucus-secreting goblet cells in the duodenum.

The protein resides in the cytoplasm. It localises to the golgi apparatus. The enzyme catalyses Broad endopeptidase specificity.. Its activity is regulated as follows. The concentration of calcium for half-maximal activity is 0.3 mM. Inhibited by calpastatin and calpeptin. Calcium-regulated non-lysosomal thiol-protease. Involved in membrane trafficking in the gastric surface mucus cells (pit cells) and may involve the membrane trafficking of mucus cells via interactions with coat protein. Proteolytically cleaves the beta-subunit of coatomer complex. In Mus musculus (Mouse), this protein is Calpain-8 (Capn8).